Consider the following 323-residue polypeptide: Probable pectate lyase A (323 aa).

The signal sequence occupies residues 1 to 20 (MTNFKWIVAAAGLLSGQVLA). N95 is a glycosylation site (N-linked (GlcNAc...) asparagine). Ca(2+) is bound by residues D136, D165, and D169. Residue R222 is part of the active site.

It belongs to the polysaccharide lyase 1 family. Ca(2+) serves as cofactor.

It is found in the secreted. The enzyme catalyses Eliminative cleavage of (1-&gt;4)-alpha-D-galacturonan to give oligosaccharides with 4-deoxy-alpha-D-galact-4-enuronosyl groups at their non-reducing ends.. Functionally, pectinolytic enzyme consist of four classes of enzymes: pectin lyase, polygalacturonase, pectin methylesterase and rhamnogalacturonase. Among pectinolytic enzymes, pectin lyase is the most important in depolymerization of pectin, since it cleaves internal glycosidic bonds of highly methylated pectins. Favors pectate, the anion, over pectin, the methyl ester. This is Probable pectate lyase A (plyA) from Aspergillus niger (strain ATCC MYA-4892 / CBS 513.88 / FGSC A1513).